A 190-amino-acid polypeptide reads, in one-letter code: Transcription factor bHLH162 (190 aa).

The segment covering 1–12 (MEPSHSNTGQSR) has biased composition (polar residues). The segment at 1–21 (MEPSHSNTGQSRSVDRKTVEK) is disordered. Residues 11–63 (SRSVDRKTVEKNRRMQMKSLYSELISLLPHHSSTEPLTLPDQLDEAANYIKKL) form the bHLH domain.

This sequence belongs to the bHLH protein family.

The protein resides in the nucleus. In Arabidopsis thaliana (Mouse-ear cress), this protein is Transcription factor bHLH162.